The sequence spans 245 residues: Orotidine 5'-phosphate decarboxylase (245 aa).

Residues D22, K44, 71–80 (DLKFHDIPNT), T131, R192, Q201, G221, and R222 each bind substrate. The Proton donor role is filled by K73.

This sequence belongs to the OMP decarboxylase family. Type 1 subfamily. Homodimer.

It carries out the reaction orotidine 5'-phosphate + H(+) = UMP + CO2. It functions in the pathway pyrimidine metabolism; UMP biosynthesis via de novo pathway; UMP from orotate: step 2/2. Its function is as follows. Catalyzes the decarboxylation of orotidine 5'-monophosphate (OMP) to uridine 5'-monophosphate (UMP). This Salmonella paratyphi A (strain ATCC 9150 / SARB42) protein is Orotidine 5'-phosphate decarboxylase.